The sequence spans 305 residues: Probable pyridoxal 5'-phosphate synthase subunit pdx1 (305 aa).

D33 serves as a coordination point for D-ribose 5-phosphate. K90 (schiff-base intermediate with D-ribose 5-phosphate) is an active-site residue. Position 162 (G162) interacts with D-ribose 5-phosphate. Position 174 (R174) interacts with D-glyceraldehyde 3-phosphate. D-ribose 5-phosphate-binding positions include G223 and G244–S245.

It belongs to the PdxS/SNZ family. As to quaternary structure, homohexamer.

It carries out the reaction aldehydo-D-ribose 5-phosphate + D-glyceraldehyde 3-phosphate + L-glutamine = pyridoxal 5'-phosphate + L-glutamate + phosphate + 3 H2O + H(+). Its pathway is cofactor biosynthesis; pyridoxal 5'-phosphate biosynthesis. Functionally, catalyzes the formation of pyridoxal 5'-phosphate from ribose 5-phosphate (RBP), glyceraldehyde 3-phosphate (G3P) and ammonia. The ammonia is provided by pdx2. Can also use ribulose 5-phosphate and dihydroxyacetone phosphate as substrates, resulting from enzyme-catalyzed isomerization of RBP and G3P, respectively. This Dictyostelium discoideum (Social amoeba) protein is Probable pyridoxal 5'-phosphate synthase subunit pdx1 (pdx1).